Consider the following 172-residue polypeptide: NADH dehydrogenase [ubiquinone] 1 alpha subcomplex subunit 8 (172 aa).

CHCH domains are found at residues 33-74 (GAQC…FRQI) and 75-118 (KRHC…LGWV). 4 consecutive short sequence motifs (cx9C motif) follow at residues 36-46 (CDKPNKEFMLC), 56-66 (CLEEGKLVNQC), 78-88 (CAEPFTEYWTC), and 100-110 (CRKQQAQFDEC). 4 disulfides stabilise this stretch: Cys-36–Cys-66, Cys-46–Cys-56, Cys-78–Cys-110, and Cys-88–Cys-100. The segment at 133 to 159 (TDRPLPENPYHSRARPEPNPEVEGDLK) is disordered. A compositionally biased stretch (basic and acidic residues) spans 146 to 159 (ARPEPNPEVEGDLK).

This sequence belongs to the complex I NDUFA8 subunit family. In terms of assembly, complex I is composed of 45 different subunits.

Its subcellular location is the mitochondrion inner membrane. The protein localises to the mitochondrion intermembrane space. It localises to the mitochondrion. Accessory subunit of the mitochondrial membrane respiratory chain NADH dehydrogenase (Complex I), that is believed not to be involved in catalysis. Complex I functions in the transfer of electrons from NADH to the respiratory chain. The immediate electron acceptor for the enzyme is believed to be ubiquinone. The chain is NADH dehydrogenase [ubiquinone] 1 alpha subcomplex subunit 8 (NDUFA8) from Bos taurus (Bovine).